Consider the following 414-residue polypeptide: Secernin-1 (414 aa).

The protein belongs to the peptidase C69 family. Secernin subfamily.

It localises to the cytoplasm. Functionally, regulates exocytosis in mast cells. Increases both the extent of secretion and the sensitivity of mast cells to stimulation with calcium. This is Secernin-1 (Scrn1) from Mus musculus (Mouse).